A 937-amino-acid polypeptide reads, in one-letter code: Periplasmic nitrate reductase (937 aa).

A signal peptide (tat-type signal) is located at residues 1–42; sequence MTSKIQGKKPTLSRRDFIKSAAAASAAASVGLSIPSVMSAEA. The region spanning 49 to 110 is the 4Fe-4S Mo/W bis-MGD-type domain; sequence WKWDKSVCRF…FCAKIMYGAD (62 aa). 4 residues coordinate [4Fe-4S] cluster: Cys-56, Cys-59, Cys-63, and Cys-96. Residues Lys-98, Gln-166, Asn-191, Cys-195, 228–235, Met-433, Gln-437, Asn-543, 568–569, Lys-591, Asp-618, and 827–836 each bind Mo-bis(molybdopterin guanine dinucleotide); these read WGANMAEM, SE, and TGRVLEHWHS. Trp-903 provides a ligand contact to substrate. Positions 911 and 928 each coordinate Mo-bis(molybdopterin guanine dinucleotide).

The protein belongs to the prokaryotic molybdopterin-containing oxidoreductase family. NasA/NapA/NarB subfamily. As to quaternary structure, component of the periplasmic nitrate reductase NapAB complex composed of NapA and NapB. [4Fe-4S] cluster is required as a cofactor. The cofactor is Mo-bis(molybdopterin guanine dinucleotide). In terms of processing, predicted to be exported by the Tat system. The position of the signal peptide cleavage has not been experimentally proven.

It is found in the periplasm. It carries out the reaction 2 Fe(II)-[cytochrome] + nitrate + 2 H(+) = 2 Fe(III)-[cytochrome] + nitrite + H2O. Its function is as follows. Catalytic subunit of the periplasmic nitrate reductase complex NapAB. Receives electrons from NapB and catalyzes the reduction of nitrate to nitrite. This chain is Periplasmic nitrate reductase, found in Helicobacter hepaticus (strain ATCC 51449 / 3B1).